The primary structure comprises 140 residues: Holo-[acyl-carrier-protein] synthase (140 aa).

D8 and E62 together coordinate Mg(2+).

This sequence belongs to the P-Pant transferase superfamily. AcpS family. It depends on Mg(2+) as a cofactor.

It is found in the cytoplasm. It carries out the reaction apo-[ACP] + CoA = holo-[ACP] + adenosine 3',5'-bisphosphate + H(+). In terms of biological role, transfers the 4'-phosphopantetheine moiety from coenzyme A to a Ser of acyl-carrier-protein. This chain is Holo-[acyl-carrier-protein] synthase, found in Cupriavidus necator (strain ATCC 17699 / DSM 428 / KCTC 22496 / NCIMB 10442 / H16 / Stanier 337) (Ralstonia eutropha).